Here is a 185-residue protein sequence, read N- to C-terminus: NEDD8-conjugating enzyme UBE2F (185 aa).

M1 is modified (N-acetylmethionine). The 154-residue stretch at 32 to 185 (VRDKLLVKEV…VDEYIKRYAR (154 aa)) folds into the UBC core domain. C116 functions as the Glycyl thioester intermediate in the catalytic mechanism.

It belongs to the ubiquitin-conjugating enzyme family. UBE2F subfamily. In terms of assembly, interacts with UBA3 and RBX2. Interacts (N-terminally acetylated form) with (via DCUN1 domain) DCUN1D1, DCUN1D2, DCUN1D3, DCUN1D4 and DCUN1D5. In terms of processing, the acetylation of Met-1 increases affinity for DCUN1D3 by about 2 orders of magnitude and is crucial for NEDD8 transfer to cullins.

The enzyme catalyses [E1 NEDD8-activating enzyme]-S-[NEDD8 protein]-yl-L-cysteine + [E2 NEDD8-conjugating enzyme]-L-cysteine = [E1 NEDD8-activating enzyme]-L-cysteine + [E2 NEDD8-conjugating enzyme]-S-[NEDD8-protein]-yl-L-cysteine.. It participates in protein modification; protein neddylation. Accepts the ubiquitin-like protein NEDD8 from the UBA3-NAE1 E1 complex and catalyzes its covalent attachment to other proteins. Together with the E3 ubiquitin ligase RNF7/RBX2, specifically neddylates cullin-5 (CUL5). Does not neddylate CUL1, CUL2, CUL3, CUL4A or CUL4B. Mediates neddylation of the CUL9-RBX1 complex. The sequence is that of NEDD8-conjugating enzyme UBE2F (Ube2f) from Rattus norvegicus (Rat).